The sequence spans 697 residues: MARQHKLEDYRNIGIMAHIDAGKTTTTERILLHTGKIHKIGETHDGASQMDWMAQEQERGITITSAATTAFWKGKRINIIDTPGHVDFTVEVERSLRVLDGAVTVLDAQSGVEPQTETVWRQATTYRVPRLIYVNKMDKAGADFFASVKSVKTRLNANAVAIQIPIGQESDFKGIVDLVEMKAYEYDGKPEENAKEIEIPFDLQALAKEKRQELIEAVATYDEEFMMKVLDGVEPTLDELKAMIRKATLTSEFFPAVCGTSFKNKGVKKMIDAVVDYLPSPLDIPAAKAHKGENEEVDVPATDDYPFTGLAFKVMTDPFVGSLTFIRLYAGTLQKGSYVYNSTKGTKERIGRLILMHANSRSEIDEANAGDIVAAVGLKGTTTGDTLIAEKAPEIVLERMVFPEPVISQALEPESKDAMEKLALGLQKLAAEDPTFRTYTDEETGQTIIAGMGELHLDIIVDRLKREHGVKAKVGAPQVSYRETITKSADVEGKHIKQSGGKGQYGHVWIKFEPNPDKGFEFVDKIVGGKIPKEYIKPIQKGLEDKMASGILAGYPMIDIKATLFDGSYHDVDSSELAYKIAASKALTKAKDLVGTVLLEPIMDVSVIIPDDYYGDVMGDITRRRGQIQESELRNDGDHILRCLTPLSEMFGYATDLRSMTAGRGNYQMQFHHYEKCPKNIADEIIKKRNIQLKDED.

Residues 8-282 (EDYRNIGIMA…AVVDYLPSPL (275 aa)) form the tr-type G domain. GTP-binding positions include 17-24 (AHIDAGKT), 81-85 (DTPGH), and 135-138 (NKMD).

The protein belongs to the TRAFAC class translation factor GTPase superfamily. Classic translation factor GTPase family. EF-G/EF-2 subfamily.

The protein localises to the cytoplasm. Its function is as follows. Catalyzes the GTP-dependent ribosomal translocation step during translation elongation. During this step, the ribosome changes from the pre-translocational (PRE) to the post-translocational (POST) state as the newly formed A-site-bound peptidyl-tRNA and P-site-bound deacylated tRNA move to the P and E sites, respectively. Catalyzes the coordinated movement of the two tRNA molecules, the mRNA and conformational changes in the ribosome. This Mycoplasmopsis agalactiae (strain NCTC 10123 / CIP 59.7 / PG2) (Mycoplasma agalactiae) protein is Elongation factor G.